Reading from the N-terminus, the 430-residue chain is Histidine--tRNA ligase (430 aa).

The protein belongs to the class-II aminoacyl-tRNA synthetase family. As to quaternary structure, homodimer.

It is found in the cytoplasm. The catalysed reaction is tRNA(His) + L-histidine + ATP = L-histidyl-tRNA(His) + AMP + diphosphate + H(+). The chain is Histidine--tRNA ligase from Acinetobacter baumannii (strain ACICU).